A 286-amino-acid chain; its full sequence is Pantothenate synthetase (286 aa).

30-37 is an ATP binding site; it reads MGCFHQGH. Catalysis depends on His-37, which acts as the Proton donor. (R)-pantoate is bound at residue Gln-61. Beta-alanine is bound at residue Gln-61. Position 147 to 150 (147 to 150) interacts with ATP; sequence GEKD. Gln-153 lines the (R)-pantoate pocket. 184–187 contributes to the ATP binding site; that stretch reads MSSR.

This sequence belongs to the pantothenate synthetase family. As to quaternary structure, homodimer.

It localises to the cytoplasm. It carries out the reaction (R)-pantoate + beta-alanine + ATP = (R)-pantothenate + AMP + diphosphate + H(+). It participates in cofactor biosynthesis; (R)-pantothenate biosynthesis; (R)-pantothenate from (R)-pantoate and beta-alanine: step 1/1. Its function is as follows. Catalyzes the condensation of pantoate with beta-alanine in an ATP-dependent reaction via a pantoyl-adenylate intermediate. The polypeptide is Pantothenate synthetase (Desulfotalea psychrophila (strain LSv54 / DSM 12343)).